The following is a 556-amino-acid chain: 2-succinyl-5-enolpyruvyl-6-hydroxy-3-cyclohexene-1-carboxylate synthase (556 aa).

The protein belongs to the TPP enzyme family. MenD subfamily. In terms of assembly, homodimer. Mg(2+) is required as a cofactor. Mn(2+) serves as cofactor. Requires thiamine diphosphate as cofactor.

The enzyme catalyses isochorismate + 2-oxoglutarate + H(+) = 5-enolpyruvoyl-6-hydroxy-2-succinyl-cyclohex-3-ene-1-carboxylate + CO2. The protein operates within quinol/quinone metabolism; 1,4-dihydroxy-2-naphthoate biosynthesis; 1,4-dihydroxy-2-naphthoate from chorismate: step 2/7. It participates in quinol/quinone metabolism; menaquinone biosynthesis. Catalyzes the thiamine diphosphate-dependent decarboxylation of 2-oxoglutarate and the subsequent addition of the resulting succinic semialdehyde-thiamine pyrophosphate anion to isochorismate to yield 2-succinyl-5-enolpyruvyl-6-hydroxy-3-cyclohexene-1-carboxylate (SEPHCHC). In Salmonella paratyphi C (strain RKS4594), this protein is 2-succinyl-5-enolpyruvyl-6-hydroxy-3-cyclohexene-1-carboxylate synthase.